Consider the following 333-residue polypeptide: NADH-quinone oxidoreductase subunit H (333 aa).

Helical transmembrane passes span 17–37, 91–111, 116–136, 156–176, 188–208, 244–264, 272–292, and 310–330; these read VIQA…MSFI, VAMA…TLGV, IGLL…LFGG, ISYE…AGSF, MWFI…GVAV, YVNI…GWLA, FIPP…MFVL, and WKVC…VILM.

This sequence belongs to the complex I subunit 1 family. NDH-1 is composed of 14 different subunits. Subunits NuoA, H, J, K, L, M, N constitute the membrane sector of the complex.

It is found in the cell inner membrane. It catalyses the reaction a quinone + NADH + 5 H(+)(in) = a quinol + NAD(+) + 4 H(+)(out). In terms of biological role, NDH-1 shuttles electrons from NADH, via FMN and iron-sulfur (Fe-S) centers, to quinones in the respiratory chain. The immediate electron acceptor for the enzyme in this species is believed to be ubiquinone. Couples the redox reaction to proton translocation (for every two electrons transferred, four hydrogen ions are translocated across the cytoplasmic membrane), and thus conserves the redox energy in a proton gradient. This subunit may bind ubiquinone. The polypeptide is NADH-quinone oxidoreductase subunit H (Acinetobacter baylyi (strain ATCC 33305 / BD413 / ADP1)).